The primary structure comprises 160 residues: SsrA-binding protein (160 aa).

The protein belongs to the SmpB family.

The protein resides in the cytoplasm. Functionally, required for rescue of stalled ribosomes mediated by trans-translation. Binds to transfer-messenger RNA (tmRNA), required for stable association of tmRNA with ribosomes. tmRNA and SmpB together mimic tRNA shape, replacing the anticodon stem-loop with SmpB. tmRNA is encoded by the ssrA gene; the 2 termini fold to resemble tRNA(Ala) and it encodes a 'tag peptide', a short internal open reading frame. During trans-translation Ala-aminoacylated tmRNA acts like a tRNA, entering the A-site of stalled ribosomes, displacing the stalled mRNA. The ribosome then switches to translate the ORF on the tmRNA; the nascent peptide is terminated with the 'tag peptide' encoded by the tmRNA and targeted for degradation. The ribosome is freed to recommence translation, which seems to be the essential function of trans-translation. This chain is SsrA-binding protein, found in Photorhabdus laumondii subsp. laumondii (strain DSM 15139 / CIP 105565 / TT01) (Photorhabdus luminescens subsp. laumondii).